The chain runs to 157 residues: Nucleoside deoxyribosyltransferase (157 aa).

Glu98 serves as the catalytic Nucleophile.

This sequence belongs to the nucleoside deoxyribosyltransferase family. Homohexamer.

It carries out the reaction 2-deoxy-D-ribosyl-base(1) + base(2) = 2-deoxy-D-ribosyl-base(2) + base(1).. It participates in nucleotide metabolism; nucleotide salvage pathway. Functionally, catalyzes the cleavage of the glycosidic bond of 2'-deoxyribonucleosides and the transfer of the deoxyribosyl moiety to an acceptor purine or pyrimidine base. This chain is Nucleoside deoxyribosyltransferase (ntd), found in Lactobacillus leichmannii.